The primary structure comprises 276 residues: NAD-capped RNA hydrolase NudC (276 aa).

Arg-82 serves as a coordination point for substrate. Residues Cys-112 and Cys-115 each coordinate Zn(2+). Glu-125 contributes to the substrate binding site. Residues Cys-130 and Cys-133 each coordinate Zn(2+). Substrate is bound at residue Tyr-138. One can recognise a Nudix hydrolase domain in the interval 139–262; sequence PRISPSMIVL…SIARYLIDLY (124 aa). Positions 172, 188, and 192 each coordinate a divalent metal cation. The short motif at 173–194 is the Nudix box element; the sequence is GFAEPGESAEDCLIREVREEVS. 206 to 213 serves as a coordination point for substrate; that stretch reads QCWPFPHS. Residue Glu-233 participates in a divalent metal cation binding. Ala-255 is a binding site for substrate.

Belongs to the Nudix hydrolase family. NudC subfamily. Homodimer. Requires Mg(2+) as cofactor. It depends on Mn(2+) as a cofactor. Zn(2+) is required as a cofactor.

It catalyses the reaction a 5'-end NAD(+)-phospho-ribonucleoside in mRNA + H2O = a 5'-end phospho-adenosine-phospho-ribonucleoside in mRNA + beta-nicotinamide D-ribonucleotide + 2 H(+). The enzyme catalyses NAD(+) + H2O = beta-nicotinamide D-ribonucleotide + AMP + 2 H(+). It carries out the reaction NADH + H2O = reduced beta-nicotinamide D-ribonucleotide + AMP + 2 H(+). Its function is as follows. mRNA decapping enzyme that specifically removes the nicotinamide adenine dinucleotide (NAD) cap from a subset of mRNAs by hydrolyzing the diphosphate linkage to produce nicotinamide mononucleotide (NMN) and 5' monophosphate mRNA. The NAD-cap is present at the 5'-end of some mRNAs and stabilizes RNA against 5'-processing. Has preference for mRNAs with a 5'-end purine. Catalyzes the hydrolysis of a broad range of dinucleotide pyrophosphates. The sequence is that of NAD-capped RNA hydrolase NudC from Pseudomonas fluorescens (strain ATCC BAA-477 / NRRL B-23932 / Pf-5).